A 37-amino-acid chain; its full sequence is Large ribosomal subunit protein bL36c (37 aa).

It belongs to the bacterial ribosomal protein bL36 family.

The protein resides in the plastid. It localises to the chloroplast. The protein is Large ribosomal subunit protein bL36c (rpl36) of Chlorella vulgaris (Green alga).